We begin with the raw amino-acid sequence, 329 residues long: Phosphate acyltransferase (329 aa).

The protein belongs to the PlsX family. As to quaternary structure, homodimer. Probably interacts with PlsY.

It is found in the cytoplasm. The enzyme catalyses a fatty acyl-[ACP] + phosphate = an acyl phosphate + holo-[ACP]. Its pathway is lipid metabolism; phospholipid metabolism. In terms of biological role, catalyzes the reversible formation of acyl-phosphate (acyl-PO(4)) from acyl-[acyl-carrier-protein] (acyl-ACP). This enzyme utilizes acyl-ACP as fatty acyl donor, but not acyl-CoA. The protein is Phosphate acyltransferase of Campylobacter lari (strain RM2100 / D67 / ATCC BAA-1060).